We begin with the raw amino-acid sequence, 189 residues long: Nucleoside triphosphate pyrophosphatase (189 aa).

The Proton acceptor role is filled by Asp70.

Belongs to the Maf family. A divalent metal cation serves as cofactor.

It is found in the cytoplasm. The enzyme catalyses a ribonucleoside 5'-triphosphate + H2O = a ribonucleoside 5'-phosphate + diphosphate + H(+). It catalyses the reaction a 2'-deoxyribonucleoside 5'-triphosphate + H2O = a 2'-deoxyribonucleoside 5'-phosphate + diphosphate + H(+). In terms of biological role, nucleoside triphosphate pyrophosphatase. May have a dual role in cell division arrest and in preventing the incorporation of modified nucleotides into cellular nucleic acids. The chain is Nucleoside triphosphate pyrophosphatase from Xylella fastidiosa (strain 9a5c).